Reading from the N-terminus, the 172-residue chain is Dual-action ribosomal maturation protein DarP (172 aa).

It belongs to the DarP family.

It localises to the cytoplasm. Member of a network of 50S ribosomal subunit biogenesis factors which assembles along the 30S-50S interface, preventing incorrect 23S rRNA structures from forming. Promotes peptidyl transferase center (PTC) maturation. In Ectopseudomonas mendocina (strain ymp) (Pseudomonas mendocina), this protein is Dual-action ribosomal maturation protein DarP.